The following is a 223-amino-acid chain: Movement and silencing protein TGBp1 (223 aa).

The (+)RNA virus helicase ATP-binding domain maps to methionine 1–isoleucine 136. The (+)RNA virus helicase C-terminal domain occupies alanine 137–asparagine 223.

The protein belongs to the Tymovirales TGBp1 protein family. In terms of assembly, homodimer and homooligomer. Interacts with capsid protein. Interacts with host AGO1; this interaction targets the host protein for degradation, thereby suppressing the antiviral RNA silencing.

It is found in the host cytoplasm. Its function is as follows. Transports viral genome to neighboring plant cells directly through plasmosdesmata, without any budding. The movement protein allows efficient cell to cell propagation, by bypassing the host cell wall barrier. Increases plasmodesma size exclusion limit. Acts as a suppressor of RNA-mediated gene silencing, also known as post-transcriptional gene silencing (PTGS), a mechanism of plant viral defense that limits the accumulation of viral RNAs. This is Movement and silencing protein TGBp1 from Crataegus (hawthorn).